The primary structure comprises 253 residues: Discoidin-1 subunit A (253 aa).

Residue S2 is modified to N-acetylserine. The region spanning 2–152 (STQGLVQLLA…ISLRCEFYTQ (151 aa)) is the F5/8 type C domain. A Cell attachment site motif is present at residues 79–81 (RGD).

In terms of assembly, tetramer of four different chains (A to D). Stalk cells.

The protein localises to the cytoplasm. In terms of biological role, galactose- and N-acetylgalactosamine-binding lectin. May play a role in cell-substratum adhesion rather than in cell-cell adhesion. May be necessary for the maintenance of normal elongate morphology during aggregation. This Dictyostelium discoideum (Social amoeba) protein is Discoidin-1 subunit A (dscA-1).